We begin with the raw amino-acid sequence, 112 residues long: Putative pterin-4-alpha-carbinolamine dehydratase (112 aa).

This sequence belongs to the pterin-4-alpha-carbinolamine dehydratase family.

It catalyses the reaction (4aS,6R)-4a-hydroxy-L-erythro-5,6,7,8-tetrahydrobiopterin = (6R)-L-erythro-6,7-dihydrobiopterin + H2O. This chain is Putative pterin-4-alpha-carbinolamine dehydratase, found in Shewanella pealeana (strain ATCC 700345 / ANG-SQ1).